A 65-amino-acid chain; its full sequence is Hirudin-3B (65 aa).

Positions 1-3 (VVY) are interaction with thrombin active site. 3 disulfide bridges follow: Cys-6–Cys-14, Cys-16–Cys-28, and Cys-22–Cys-39. Residues 40–65 (VTGEGTPKPQSHNDGDFEEIPEEYLQ) are disordered. A glycan (O-linked (GalNAc...) threonine) is linked at Thr-45. The interaction with fibrinogen-binding exosite of thrombin stretch occupies residues 55–65 (DFEEIPEEYLQ). The segment covering 55-65 (DFEEIPEEYLQ) has biased composition (acidic residues). The residue at position 63 (Tyr-63) is a Sulfotyrosine.

This sequence belongs to the protease inhibitor I14 (hirudin) family.

It localises to the secreted. In terms of biological role, hirudin is a potent thrombin-specific protease inhibitor. It forms a stable non-covalent complex with alpha-thrombin, thereby abolishing its ability to cleave fibrinogen. The polypeptide is Hirudin-3B (Hirudo medicinalis (Medicinal leech)).